We begin with the raw amino-acid sequence, 195 residues long: Putative Tricorn-like protease N-terminal subunit (195 aa).

This sequence belongs to the peptidase S41B family.

The protein localises to the cytoplasm. Functionally, degrades oligopeptides in a sequential manner. This Sulfurisphaera tokodaii (strain DSM 16993 / JCM 10545 / NBRC 100140 / 7) (Sulfolobus tokodaii) protein is Putative Tricorn-like protease N-terminal subunit (triN).